Reading from the N-terminus, the 384-residue chain is Putative ankyrin repeat protein L72 (384 aa).

ANK repeat units follow at residues 88–117 (ADMC…NIKN), 119–146 (GNLL…KEFS), 171–200 (DHNV…ILSV), 202–231 (DDSL…DIES), 233–261 (NNYC…NPNN), 298–324 (ILYQ…AGIK), and 325–357 (PTNS…DINV).

The polypeptide is Putative ankyrin repeat protein L72 (Acanthamoeba polyphaga (Amoeba)).